The primary structure comprises 375 residues: Trichodiene synthase (375 aa).

Belongs to the trichodiene synthase family.

It catalyses the reaction (2E,6E)-farnesyl diphosphate = trichodiene + diphosphate. It participates in sesquiterpene biosynthesis; trichothecene biosynthesis. Functionally, TS is a member of the terpene cyclase group of enzymes. It catalyzes the isomerization and cyclization of farnesyl pyro-phosphate to form trichodiene, the first cyclic intermediate in the biosynthetic pathway for trichothecenes. It serves to branch trichothecene biosynthesis from the isoprenoid pathway. The protein is Trichodiene synthase (TRI5) of Fusarium boothii.